We begin with the raw amino-acid sequence, 67 residues long: Large ribosomal subunit protein bL32 (67 aa).

Positions 1–19 are enriched in basic residues; sequence MAVPKRKMSRSNTRSRRSQ. Residues 1–22 are disordered; it reads MAVPKRKMSRSNTRSRRSQWKA.

It belongs to the bacterial ribosomal protein bL32 family.

The sequence is that of Large ribosomal subunit protein bL32 from Kineococcus radiotolerans (strain ATCC BAA-149 / DSM 14245 / SRS30216).